The following is a 161-amino-acid chain: SsrA-binding protein (161 aa).

Belongs to the SmpB family.

It localises to the cytoplasm. Required for rescue of stalled ribosomes mediated by trans-translation. Binds to transfer-messenger RNA (tmRNA), required for stable association of tmRNA with ribosomes. tmRNA and SmpB together mimic tRNA shape, replacing the anticodon stem-loop with SmpB. tmRNA is encoded by the ssrA gene; the 2 termini fold to resemble tRNA(Ala) and it encodes a 'tag peptide', a short internal open reading frame. During trans-translation Ala-aminoacylated tmRNA acts like a tRNA, entering the A-site of stalled ribosomes, displacing the stalled mRNA. The ribosome then switches to translate the ORF on the tmRNA; the nascent peptide is terminated with the 'tag peptide' encoded by the tmRNA and targeted for degradation. The ribosome is freed to recommence translation, which seems to be the essential function of trans-translation. The polypeptide is SsrA-binding protein (Vibrio campbellii (strain ATCC BAA-1116)).